The chain runs to 228 residues: Deoxyribose-phosphate aldolase (228 aa).

Catalysis depends on Asp-96, which acts as the Proton donor/acceptor. Residue Lys-157 is the Schiff-base intermediate with acetaldehyde of the active site. Lys-185 functions as the Proton donor/acceptor in the catalytic mechanism.

It belongs to the DeoC/FbaB aldolase family. DeoC type 1 subfamily.

The protein resides in the cytoplasm. It carries out the reaction 2-deoxy-D-ribose 5-phosphate = D-glyceraldehyde 3-phosphate + acetaldehyde. It participates in carbohydrate degradation; 2-deoxy-D-ribose 1-phosphate degradation; D-glyceraldehyde 3-phosphate and acetaldehyde from 2-deoxy-alpha-D-ribose 1-phosphate: step 2/2. Functionally, catalyzes a reversible aldol reaction between acetaldehyde and D-glyceraldehyde 3-phosphate to generate 2-deoxy-D-ribose 5-phosphate. The sequence is that of Deoxyribose-phosphate aldolase from Cyanothece sp. (strain PCC 7425 / ATCC 29141).